Here is a 42-residue protein sequence, read N- to C-terminus: MTKRTLEGTKRKSIRKSGFRARMATKLGRKVLNKRRQKGENS.

This sequence belongs to the bacterial ribosomal protein bL34 family.

It localises to the plastid. Its subcellular location is the chloroplast. The protein is Large ribosomal subunit protein bL34c (rpl34) of Olisthodiscus luteus (Marine phytoflagellate).